The primary structure comprises 184 residues: Ribulose bisphosphate carboxylase small subunit, chloroplastic 5 (184 aa).

A chloroplast-targeting transit peptide spans 1–43 (MAAAMMNKTIVVSKDGCARSSSIPKVATNKMGFASAVAMKKSR).

This sequence belongs to the RuBisCO small chain family. As to quaternary structure, heterohexadecamer of 8 large and 8 small subunits.

It is found in the plastid. It localises to the chloroplast. In terms of biological role, ruBisCO catalyzes two reactions: the carboxylation of D-ribulose 1,5-bisphosphate, the primary event in carbon dioxide fixation, as well as the oxidative fragmentation of the pentose substrate. Both reactions occur simultaneously and in competition at the same active site. Although the small subunit is not catalytic it is essential for maximal activity. This is Ribulose bisphosphate carboxylase small subunit, chloroplastic 5 from Acetabularia peniculus (Green alga).